The chain runs to 445 residues: Maltoporin 2 (445 aa).

A signal peptide spans 1–25; it reads MKMKAKWLPIAAAVTAALASQAAFA.

Belongs to the porin LamB (TC 1.B.3) family. In terms of assembly, homotrimer formed of three 18-stranded antiparallel beta-barrels, containing three independent channels.

The protein resides in the cell outer membrane. The catalysed reaction is beta-maltose(in) = beta-maltose(out). Functionally, involved in the transport of maltose and maltodextrins. The protein is Maltoporin 2 of Aeromonas salmonicida (strain A449).